We begin with the raw amino-acid sequence, 940 residues long: UvrABC system protein A (940 aa).

Residue 31-38 participates in ATP binding; it reads GLSGSGKS. The C4-type zinc-finger motif lies at 252–279; the sequence is CPHCGYSMRELEPRLFSFNNPAGACPTC. ABC transporter domains are found at residues 309-586 and 606-936; these read WDQK…PNSL and KDAK…RFLK. Residue 639–646 participates in ATP binding; it reads GVSGSGKS. The segment at 739 to 765 adopts a C4-type zinc-finger fold; that stretch reads CEACQGDGVIKVEMHFLPDVYVPCDVC.

It belongs to the ABC transporter superfamily. UvrA family. Forms a heterotetramer with UvrB during the search for lesions.

It is found in the cytoplasm. Functionally, the UvrABC repair system catalyzes the recognition and processing of DNA lesions. UvrA is an ATPase and a DNA-binding protein. A damage recognition complex composed of 2 UvrA and 2 UvrB subunits scans DNA for abnormalities. When the presence of a lesion has been verified by UvrB, the UvrA molecules dissociate. This is UvrABC system protein A from Vibrio cholerae serotype O1 (strain ATCC 39315 / El Tor Inaba N16961).